The chain runs to 327 residues: Cytochrome c oxidase subunit 2 (327 aa).

An N-terminal signal peptide occupies residues 1-23 (MEQIPASIWTLTAGVVVTLISFW). The next 2 helical transmembrane spans lie at 56–78 (LFLV…AGEE) and 96–114 (AIPA…DIFQ). 4 residues coordinate Cu cation: H221, C255, C259, and H263.

This sequence belongs to the cytochrome c oxidase subunit 2 family. It depends on Cu cation as a cofactor.

Its subcellular location is the cell membrane. It catalyses the reaction 4 Fe(II)-[cytochrome c] + O2 + 8 H(+)(in) = 4 Fe(III)-[cytochrome c] + 2 H2O + 4 H(+)(out). In terms of biological role, subunits I and II form the functional core of the enzyme complex. Electrons originating in cytochrome c are transferred via heme a and Cu(A) to the binuclear center formed by heme a3 and Cu(B). This is Cytochrome c oxidase subunit 2 (ctaC) from Thermostichus vulcanus (Synechococcus vulcanus).